A 353-amino-acid polypeptide reads, in one-letter code: Rhodopsin (353 aa).

Residues 1-36 (MNGTEGDNFYVPFSNKTGLARSPYEYPQYYLAEPWK) lie on the Extracellular side of the membrane. Residues N2 and N15 are each glycosylated (N-linked (GlcNAc...) asparagine). Residues 37-61 (YSALAAYMFFLILVGFPVNFLTLFV) form a helical membrane-spanning segment. The Cytoplasmic portion of the chain corresponds to 62–73 (TVQHKKLRTPLN). The helical transmembrane segment at 74–96 (YILLNLAMANLFMVLFGFTVTMY) threads the bilayer. Topologically, residues 97-110 (TSMNGYFVFGPTMC) are extracellular. Residues C110 and C187 are joined by a disulfide bond. The chain crosses the membrane as a helical span at residues 111 to 133 (SIEGFFATLGGEVALWSLVVLAI). A 'Ionic lock' involved in activated form stabilization motif is present at residues 134–136 (ERY). The Cytoplasmic portion of the chain corresponds to 134–152 (ERYIVICKPMGNFRFGNTH). Residues 153 to 173 (AIMGVAFTWIMALACAAPPLV) form a helical membrane-spanning segment. At 174-202 (GWSRYIPEGMQCSCGPDYYTLNPNFNNES) the chain is on the extracellular side. A helical transmembrane segment spans residues 203–224 (YVVYMFVVHFLVPFVIIFFCYG). The Cytoplasmic segment spans residues 225 to 252 (RLLCTVKEAAAAQQESASTQKAEKEVTR). Residues 253–274 (MVVLMVIGFLVCWVPYASVAFY) traverse the membrane as a helical segment. Residues 275-286 (IFTHQGSDFGAT) lie on the Extracellular side of the membrane. The chain crosses the membrane as a helical span at residues 287 to 308 (FMTLPAFFAKSSALYNPVIYIL). At K296 the chain carries N6-(retinylidene)lysine. Over 309 to 353 (MNKQFRNCMITTLCCGKNPLGDDESGASTSKTEVSSVSTSPVSPA) the chain is Cytoplasmic. Residues 330–353 (DDESGASTSKTEVSSVSTSPVSPA) form a disordered region. Positions 336-353 (STSKTEVSSVSTSPVSPA) are enriched in low complexity.

Belongs to the G-protein coupled receptor 1 family. Opsin subfamily. Post-translationally, phosphorylated on some or all of the serine and threonine residues present in the C-terminal region. Contains one covalently linked retinal chromophore. In terms of tissue distribution, short photoreceptor cells.

Its subcellular location is the membrane. It localises to the cell projection. It is found in the cilium. The protein localises to the photoreceptor outer segment. In terms of biological role, photoreceptor required for image-forming vision at low light intensity. While most salt water fish species use retinal as chromophore, most freshwater fish use 3-dehydroretinal, or a mixture of retinal and 3-dehydroretinal. Light-induced isomerization of 11-cis to all-trans retinal triggers a conformational change that activates signaling via G-proteins. Subsequent receptor phosphorylation mediates displacement of the bound G-protein alpha subunit by arrestin and terminates signaling. The sequence is that of Rhodopsin (RHO) from Lethenteron camtschaticum (Japanese lamprey).